The following is a 686-amino-acid chain: DNA ligase (686 aa).

NAD(+) is bound by residues Asp34–Asp38, Ser83–Ile84, and Glu120. The active-site N6-AMP-lysine intermediate is Lys122. The NAD(+) site is built by Arg143, Glu180, Lys298, and Lys322. Residues Cys420, Cys423, Cys438, and Cys444 each contribute to the Zn(2+) site. In terms of domain architecture, BRCT spans Gln603–Gly686.

The protein belongs to the NAD-dependent DNA ligase family. LigA subfamily. Mg(2+) serves as cofactor. The cofactor is Mn(2+).

The catalysed reaction is NAD(+) + (deoxyribonucleotide)n-3'-hydroxyl + 5'-phospho-(deoxyribonucleotide)m = (deoxyribonucleotide)n+m + AMP + beta-nicotinamide D-nucleotide.. Functionally, DNA ligase that catalyzes the formation of phosphodiester linkages between 5'-phosphoryl and 3'-hydroxyl groups in double-stranded DNA using NAD as a coenzyme and as the energy source for the reaction. It is essential for DNA replication and repair of damaged DNA. In Thiobacillus denitrificans (strain ATCC 25259 / T1), this protein is DNA ligase.